We begin with the raw amino-acid sequence, 186 residues long: MLIGLTGTPGTGKTSVSKLLEKKRQWKIIHLNELIKEEHLYTEVDEKRDSVVADMELVRSRLPELINEMEKEPANKVVILESHLAHYITDIVIVLRAYPPELKKRLEKRGYSEEKVNENAEAESIDLILAEAFEWCDKVFEINTTGRTAEETAGDVEKIIDSLLSGKEEQLQEYGPGSLDWIDSVP.

ATP-binding residues include glycine 10, glycine 12, lysine 13, threonine 14, and serine 15. The tract at residues 30-53 is NMP; it reads HLNELIKEEHLYTEVDEKRDSVVA. Residues 108-118 are LID; it reads KRGYSEEKVNE. Arginine 109 serves as a coordination point for ATP.

It belongs to the adenylate kinase family. AK6 subfamily. As to quaternary structure, interacts with uS11. Not a structural component of 40S pre-ribosomes, but transiently interacts with them by binding to uS11.

It carries out the reaction AMP + ATP = 2 ADP. It catalyses the reaction ATP + H2O = ADP + phosphate + H(+). Broad-specificity nucleoside monophosphate (NMP) kinase that catalyzes the reversible transfer of the terminal phosphate group between nucleoside triphosphates and monophosphates. Also has ATPase activity. Involved in the late maturation steps of the 30S ribosomal particles, specifically 16S rRNA maturation. While NMP activity is not required for ribosome maturation, ATPase activity is. Associates transiently with small ribosomal subunit protein uS11. ATP hydrolysis breaks the interaction with uS11. May temporarily remove uS11 from the ribosome to enable a conformational change of the ribosomal RNA that is needed for the final maturation step of the small ribosomal subunit. The sequence is that of Putative adenylate kinase from Methanosarcina acetivorans (strain ATCC 35395 / DSM 2834 / JCM 12185 / C2A).